The primary structure comprises 324 residues: MSESNAASVRTVACLLGPTASGKTAAALALAARRPIEIVSVDSALVYRGMDIGTAKPTREERAAVPHHLIDIVDPADAYSAAGFRADALRVVAEIAARGRTPLLAGGTMLYYKALTQGLNDLPAADPDVRATLDAEAARDGWPALHARLASVDPATAARLAPNDAQRIQRALEVYLLTGRPMSALLAAPPRNDDAAAGLRFVPVALEPSDRAVLHARIAARFDAMLEAGFIDEVERLRRRDDLHLGLPSMRCVGYRQAWEYLEGVTDYRMMRDKGIFATRQLCKRQLTWLRAMPARIVVDCCAQDATARAVDALERVLDGRTPA.

Residue 17–24 coordinates ATP; it reads GPTASGKT. 19-24 is a binding site for substrate; sequence TASGKT. Interaction with substrate tRNA stretches follow at residues 42–45, 166–170, and 251–256; these read DSAL, QRIQR, and RCVGYR.

Belongs to the IPP transferase family. In terms of assembly, monomer. It depends on Mg(2+) as a cofactor.

It catalyses the reaction adenosine(37) in tRNA + dimethylallyl diphosphate = N(6)-dimethylallyladenosine(37) in tRNA + diphosphate. Its function is as follows. Catalyzes the transfer of a dimethylallyl group onto the adenine at position 37 in tRNAs that read codons beginning with uridine, leading to the formation of N6-(dimethylallyl)adenosine (i(6)A). This chain is tRNA dimethylallyltransferase, found in Burkholderia thailandensis (strain ATCC 700388 / DSM 13276 / CCUG 48851 / CIP 106301 / E264).